The primary structure comprises 192 residues: Group XIIA secretory phospholipase A2 (192 aa).

Residues 1 to 25 (MVTPRPAPARSPALLLLLLLATARG) form the signal peptide. Residues G91, P93, and F95 each contribute to the Ca(2+) site. Residue H113 is part of the active site. Position 114 (D114) interacts with Ca(2+). D128 is a catalytic residue.

This sequence belongs to the phospholipase A2 family. Ca(2+) serves as cofactor.

Its subcellular location is the secreted. The protein localises to the cytoplasm. The enzyme catalyses a 1,2-diacyl-sn-glycero-3-phosphocholine + H2O = a 1-acyl-sn-glycero-3-phosphocholine + a fatty acid + H(+). PA2 catalyzes the calcium-dependent hydrolysis of the 2-acyl groups in 3-sn-phosphoglycerides. Does not exhibit detectable activity toward sn-2-arachidonoyl- or linoleoyl-phosphatidylcholine or -phosphatidylethanolamine. The protein is Group XIIA secretory phospholipase A2 (Pla2g12a) of Mus musculus (Mouse).